Consider the following 150-residue polypeptide: D-aminoacyl-tRNA deacylase (150 aa).

The Gly-cisPro motif, important for rejection of L-amino acids motif lies at 140–141 (GP).

It belongs to the DTD family. Homodimer.

The protein localises to the cytoplasm. It catalyses the reaction glycyl-tRNA(Ala) + H2O = tRNA(Ala) + glycine + H(+). The enzyme catalyses a D-aminoacyl-tRNA + H2O = a tRNA + a D-alpha-amino acid + H(+). The catalysed reaction is D-tyrosyl-tRNA(Tyr) + H2O = D-tyrosine + tRNA(Tyr). Its function is as follows. An aminoacyl-tRNA editing enzyme that deacylates mischarged D-aminoacyl-tRNAs. Hydrolyzes D-tyrosyl-tRNA(Tyr) into D-tyrosine and free tRNA(Tyr). May also deacylate mischarged D-leucyl-tRNA(Leu). Also deacylates mischarged glycyl-tRNA(Ala), protecting cells against glycine mischarging by AlaRS. Acts via tRNA-based rather than protein-based catalysis; rejects L-amino acids rather than detecting D-amino acids in the active site. By recycling D-aminoacyl-tRNA to D-amino acids and free tRNA molecules, this enzyme counteracts the toxicity associated with the formation of D-aminoacyl-tRNA entities in vivo and helps enforce protein L-homochirality. The protein is D-aminoacyl-tRNA deacylase of Saccharomyces cerevisiae (strain ATCC 204508 / S288c) (Baker's yeast).